The following is a 92-amino-acid chain: Small ribosomal subunit protein bS20 (92 aa).

Residues 1 to 23 form a disordered region; the sequence is MANSPSAKKRAIQAEKRRSHNAS.

This sequence belongs to the bacterial ribosomal protein bS20 family.

In terms of biological role, binds directly to 16S ribosomal RNA. This chain is Small ribosomal subunit protein bS20, found in Stutzerimonas stutzeri (strain A1501) (Pseudomonas stutzeri).